We begin with the raw amino-acid sequence, 393 residues long: NAD(P)H-quinone oxidoreductase subunit H, chloroplastic (393 aa).

The protein belongs to the complex I 49 kDa subunit family. As to quaternary structure, NDH is composed of at least 16 different subunits, 5 of which are encoded in the nucleus.

It localises to the plastid. Its subcellular location is the chloroplast thylakoid membrane. The catalysed reaction is a plastoquinone + NADH + (n+1) H(+)(in) = a plastoquinol + NAD(+) + n H(+)(out). It catalyses the reaction a plastoquinone + NADPH + (n+1) H(+)(in) = a plastoquinol + NADP(+) + n H(+)(out). NDH shuttles electrons from NAD(P)H:plastoquinone, via FMN and iron-sulfur (Fe-S) centers, to quinones in the photosynthetic chain and possibly in a chloroplast respiratory chain. The immediate electron acceptor for the enzyme in this species is believed to be plastoquinone. Couples the redox reaction to proton translocation, and thus conserves the redox energy in a proton gradient. This is NAD(P)H-quinone oxidoreductase subunit H, chloroplastic from Huperzia lucidula (Shining clubmoss).